The following is a 365-amino-acid chain: 2-aminoethylphosphonate--pyruvate transaminase (365 aa).

Lys194 carries the N6-(pyridoxal phosphate)lysine modification.

Belongs to the class-V pyridoxal-phosphate-dependent aminotransferase family. PhnW subfamily. Homodimer. Requires pyridoxal 5'-phosphate as cofactor.

It carries out the reaction (2-aminoethyl)phosphonate + pyruvate = phosphonoacetaldehyde + L-alanine. Its function is as follows. Involved in phosphonate degradation. This chain is 2-aminoethylphosphonate--pyruvate transaminase, found in Bacillus thuringiensis (strain Al Hakam).